Consider the following 44-residue polypeptide: Thymosin beta (44 aa).

The disordered stretch occupies residues 1–44 (MSDKHDKPDISEVTKFDKSKLKKTETHEKNPLPTKETIDQEKQG). Position 2 is an N-acetylserine (Ser-2).

As to expression, expressed in regenerating axons.

It is found in the cytoplasm. It localises to the cytoskeleton. Plays an important role in the organization of the cytoskeleton. Binds to and sequesters actin monomers (G actin) and therefore inhibits actin polymerization. May be involved in the regulation of structural plasticity in the CNS. This Aplysia californica (California sea hare) protein is Thymosin beta.